A 113-amino-acid chain; its full sequence is Large ribosomal subunit protein bL17 (113 aa).

It belongs to the bacterial ribosomal protein bL17 family. Part of the 50S ribosomal subunit. Contacts protein L32.

The sequence is that of Large ribosomal subunit protein bL17 from Clostridioides difficile (strain 630) (Peptoclostridium difficile).